The following is a 443-amino-acid chain: Structure-specific endonuclease subunit SLX1 (443 aa).

The GIY-YIG domain occupies 13-93 (RVYVCYCLRS…QKPHASRHLR (81 aa)). The segment at 121–140 (FPATRSSAPSSAASHDSGLN) is disordered. The segment at 361 to 419 (CGLCGGHINRHVPLSYTHCPHACDAVFHLTCLARYSLEQETRAHARTFCLPTSAWCPMC) adopts an SLX1-type zinc-finger fold.

It belongs to the SLX1 family. Forms a heterodimer with SLX4. A divalent metal cation serves as cofactor.

It is found in the nucleus. Functionally, catalytic subunit of the SLX1-SLX4 structure-specific endonuclease that resolves DNA secondary structures generated during DNA repair and recombination. Has endonuclease activity towards branched DNA substrates, introducing single-strand cuts in duplex DNA close to junctions with ss-DNA. This chain is Structure-specific endonuclease subunit SLX1, found in Malassezia globosa (strain ATCC MYA-4612 / CBS 7966) (Dandruff-associated fungus).